A 106-amino-acid polypeptide reads, in one-letter code: Large ribosomal subunit protein uL24 (106 aa).

It belongs to the universal ribosomal protein uL24 family. As to quaternary structure, part of the 50S ribosomal subunit.

Its function is as follows. One of two assembly initiator proteins, it binds directly to the 5'-end of the 23S rRNA, where it nucleates assembly of the 50S subunit. One of the proteins that surrounds the polypeptide exit tunnel on the outside of the subunit. The chain is Large ribosomal subunit protein uL24 from Dechloromonas aromatica (strain RCB).